A 306-amino-acid chain; its full sequence is Ribonuclease HIII (306 aa).

Positions 87–302 (WSVVGSDEVG…TKKAEALAKK (216 aa)) constitute an RNase H type-2 domain. A divalent metal cation contacts are provided by Asp93, Glu94, and Asp196.

The protein belongs to the RNase HII family. RnhC subfamily. Mn(2+) serves as cofactor. Mg(2+) is required as a cofactor.

The protein resides in the cytoplasm. The catalysed reaction is Endonucleolytic cleavage to 5'-phosphomonoester.. Its function is as follows. Endonuclease that specifically degrades the RNA of RNA-DNA hybrids. In Exiguobacterium sibiricum (strain DSM 17290 / CCUG 55495 / CIP 109462 / JCM 13490 / 255-15), this protein is Ribonuclease HIII.